Here is a 537-residue protein sequence, read N- to C-terminus: Extracellular exo-inulinase (537 aa).

An N-terminal signal peptide occupies residues 1–19; that stretch reads MAPLSKALSVFMLMGITYA. Residues N40 and D41 each contribute to the beta-D-fructose site. The Nucleophile role is filled by D41. An N-linked (GlcNAc...) asparagine glycan is attached at N49. Beta-D-fructose-binding residues include Q57 and W65. The N-linked (GlcNAc...) asparagine glycan is linked to N67. Residue S103 participates in beta-D-fructose binding. N111 and N112 each carry an N-linked (GlcNAc...) asparagine glycan. 3 residues coordinate beta-D-fructose: R188, D189, and E241. E241 (proton donor/acceptor) is an active-site residue. N254 and N300 each carry an N-linked (GlcNAc...) asparagine glycan. W335 provides a ligand contact to beta-D-fructose. N398 and N430 each carry an N-linked (GlcNAc...) asparagine glycan.

It belongs to the glycosyl hydrolase 32 family.

Its subcellular location is the secreted. The enzyme catalyses Hydrolysis of terminal, non-reducing (2-&gt;1)- and (2-&gt;6)-linked beta-D-fructofuranose residues in fructans.. Exo-inulinase involved in utilization of the plant storage polymer inulin, consisting of fructooligosaccharides with a degree of polymerization (DP) value from 2 to 60. Splits off terminal fructose units successively from the non-reducing end of the inulin molecule, and also hydrolyzes levan, stachyose and raffinose. Hydrolyzes both beta-2,1- as well as beta-2,6-fructosyl linkages in fructooligosaccharides. This chain is Extracellular exo-inulinase, found in Aspergillus awamori (Black koji mold).